Consider the following 330-residue polypeptide: DNA primase small subunit PriS (330 aa).

Catalysis depends on residues D101 and D103. Positions 116, 119, 128, and 131 each coordinate Zn(2+). D235 is an active-site residue.

This sequence belongs to the eukaryotic-type primase small subunit family. Heterodimer of a small subunit (PriS) and a large subunit (PriL). It depends on Mg(2+) as a cofactor. The cofactor is Mn(2+).

Functionally, catalytic subunit of DNA primase, an RNA polymerase that catalyzes the synthesis of short RNA molecules used as primers for DNA polymerase during DNA replication. The small subunit contains the primase catalytic core and has DNA synthesis activity on its own. Binding to the large subunit stabilizes and modulates the activity, increasing the rate of DNA synthesis while decreasing the length of the DNA fragments, and conferring RNA synthesis capability. The DNA polymerase activity may enable DNA primase to also catalyze primer extension after primer synthesis. May also play a role in DNA repair. Possesses a template-independent 3'-terminal nucleotidyl transferase activity. This is DNA primase small subunit PriS from Saccharolobus solfataricus (strain ATCC 35092 / DSM 1617 / JCM 11322 / P2) (Sulfolobus solfataricus).